The primary structure comprises 442 residues: Tol-Pal system protein TolB (442 aa).

Residues 1–26 (MRHRSCFSLFAGLALVFCLAVGTAAA) form the signal peptide.

It belongs to the TolB family. The Tol-Pal system is composed of five core proteins: the inner membrane proteins TolA, TolQ and TolR, the periplasmic protein TolB and the outer membrane protein Pal. They form a network linking the inner and outer membranes and the peptidoglycan layer.

The protein resides in the periplasm. Functionally, part of the Tol-Pal system, which plays a role in outer membrane invagination during cell division and is important for maintaining outer membrane integrity. In Nitratidesulfovibrio vulgaris (strain ATCC 29579 / DSM 644 / CCUG 34227 / NCIMB 8303 / VKM B-1760 / Hildenborough) (Desulfovibrio vulgaris), this protein is Tol-Pal system protein TolB.